The following is a 276-amino-acid chain: 2-dehydro-3-deoxyphosphooctonate aldolase (276 aa).

It belongs to the KdsA family.

It localises to the cytoplasm. The catalysed reaction is D-arabinose 5-phosphate + phosphoenolpyruvate + H2O = 3-deoxy-alpha-D-manno-2-octulosonate-8-phosphate + phosphate. The protein operates within carbohydrate biosynthesis; 3-deoxy-D-manno-octulosonate biosynthesis; 3-deoxy-D-manno-octulosonate from D-ribulose 5-phosphate: step 2/3. Its pathway is bacterial outer membrane biogenesis; lipopolysaccharide biosynthesis. In Stenotrophomonas maltophilia (strain R551-3), this protein is 2-dehydro-3-deoxyphosphooctonate aldolase.